The following is a 231-amino-acid chain: Probable transglycosylase SceD (231 aa).

Residues 1–27 (MKKTLLASSLAVGLGIVAGNAGHEAHA) form the signal peptide. Positions 106 to 116 (AVQANQVQSQE) are enriched in polar residues. Positions 106-153 (AVQANQVQSQEVEAPQNAQTQQPQASTSNNSQVTATPTESKSSEGSSV) are disordered. Low complexity predominate over residues 119-137 (APQNAQTQQPQASTSNNSQ). Over residues 138 to 153 (VTATPTESKSSEGSSV) the composition is skewed to polar residues.

The protein belongs to the transglycosylase family. SceD subfamily.

Its subcellular location is the secreted. In terms of biological role, is able to cleave peptidoglycan and affects clumping and separation of bacterial cells. The polypeptide is Probable transglycosylase SceD (sceD) (Staphylococcus aureus (strain USA300)).